Reading from the N-terminus, the 749-residue chain is RNA-binding protein 5-B (749 aa).

The interval 1–88 (MGSDKRVSRS…YHSDGDYMDH (88 aa)) is disordered. An RRM 1 domain is found at 102–182 (KTIMLRGLPI…KTIAMHYSNP (81 aa)). The RanBP2-type zinc finger occupies 185–214 (KFEDWLCNKCGLYNFRRRLKCFRCGAAKAE). Residues 241–325 (SAIILRNIGP…KTIGVDFAKS (85 aa)) enclose the RRM 2 domain. Disordered regions lie at residues 425 to 471 (QMYQ…SVPD), 520 to 558 (PAAD…AQQI), 570 to 595 (NKQK…ESAA), and 626 to 680 (TEEE…NSNI). A compositionally biased stretch (low complexity) spans 429-460 (QPGSPTQSGTSTAASTTPASTTSTEEATTPTA). 2 stretches are compositionally biased toward basic and acidic residues: residues 585–594 (SRDEERKESA) and 627–648 (EEEK…EKYG). The G-patch domain maps to 677–723 (NSNIGNKMLQAMGWKEGSGLGRKSQGITAPIQAQVRMRGAGLGAKGS).

It belongs to the RBM5/RBM10 family. As to quaternary structure, component of the spliceosome A complex (also known as the prespliceosome). Appears to dissociate from the spliceosome upon formation of the spliceosome B complex (also known as the precatalytic spliceosome), in which the heterotrimeric U4/U6.U5 snRNPs are bound.

The protein localises to the nucleus. Its function is as follows. Component of the spliceosome A complex. Regulates alternative splicing of a number of mRNAs. May modulate splice site pairing after recruitment of the U1 and U2 snRNPs to the 5' and 3' splice sites of the intron. This chain is RNA-binding protein 5-B (rbm5-b), found in Xenopus laevis (African clawed frog).